We begin with the raw amino-acid sequence, 198 residues long: MKLYSLSVLYKGEAKVVLLKAAYDVSSFSFFQRSSVQEFMTFTSQLIVERSSKGTRASVKEQDYLCHVYVRNDSLAGVVIADNEYPSRVAFTLLEKVLDEFSKQVDRIDWPVGSPATIHYPALDGHLSRYQNPREADPMTKVQAELDETKIILHNTMESLLERGEKLDDLVSKSEVLGTQSKAFYKTARKQNSCCAIM.

One can recognise a Longin domain in the interval 8–126 (VLYKGEAKVV…TIHYPALDGH (119 aa)). The 61-residue stretch at 138 to 198 (PMTKVQAELD…RKQNSCCAIM (61 aa)) folds into the v-SNARE coiled-coil homology domain. S159 carries the phosphoserine modification. Residue C194 is the site of S-palmitoyl cysteine attachment. C195 is modified (cysteine methyl ester). The S-farnesyl cysteine moiety is linked to residue C195. The propeptide at 196–198 (AIM) is removed in mature form.

This sequence belongs to the synaptobrevin family. As to quaternary structure, identified in 2 different SNARE complexes; the first one composed of GOSR1, GOSR2 and STX5 and the second one composed of BET1L, GOSR1 and STX5. Post-translationally, palmitoylated; catalyzes its own palmitoylation. Palmitoylation is required for Golgi targeting. Farnesylation is required for Golgi targeting.

Its subcellular location is the cytoplasm. The protein resides in the cytosol. It localises to the cytoplasmic vesicle membrane. The protein localises to the golgi apparatus membrane. Vesicular soluble NSF attachment protein receptor (v-SNARE) mediating vesicle docking and fusion to a specific acceptor cellular compartment. Functions in endoplasmic reticulum to Golgi transport; as part of a SNARE complex composed of GOSR1, GOSR2 and STX5. Functions in early/recycling endosome to TGN transport; as part of a SNARE complex composed of BET1L, GOSR1 and STX5. Has a S-palmitoyl transferase activity. This chain is Synaptobrevin homolog YKT6 (YKT6), found in Homo sapiens (Human).